Here is a 709-residue protein sequence, read N- to C-terminus: Septu protein PtuA (709 aa).

In terms of biological role, component of antiviral defense system Septu type II, composed of PtuA and PtuB. Expression of Septu type II in B.subtilis (strain BEST7003) confers resistance to phages SBSphiC and SpBeta. May be an ATPase. The chain is Septu protein PtuA from Bacillus mycoides (strain KBAB4) (Bacillus weihenstephanensis).